A 1923-amino-acid chain; its full sequence is Endoribonuclease Dicer (1923 aa).

One can recognise a Helicase ATP-binding domain in the interval L51–E227. L64–T71 contributes to the ATP binding site. Residues D175–H178 carry the DECH box motif. The interval D256–D595 is required for interaction with PRKRA and TARBP2. The tract at residues V410–N433 is disordered. 2 positions are modified to phosphoserine: S413 and S415. Positions D414–E425 are enriched in acidic residues. Positions N433 to E602 constitute a Helicase C-terminal domain. The 93-residue stretch at A629–Y721 folds into the Dicer dsRNA-binding fold domain. A PAZ domain is found at K894–P1041. 2 positions are modified to phosphoserine: S1015 and S1160. Polar residues-rich tracts occupy residues N1246–S1255 and S1277–L1290. Positions N1246–G1291 are disordered. The RNase III 1 domain occupies A1276 to T1404. The Mg(2+) site is built by E1316, E1396, and E1399. 3 positions are modified to phosphoserine: S1461, S1469, and S1471. Positions F1667–G1825 constitute an RNase III 2 domain. The Mg(2+) site is built by E1706, D1811, and E1814. The region spanning S1853–A1915 is the DRBM domain. S1869 carries the phosphoserine modification.

The protein belongs to the helicase family. Dicer subfamily. Component of the RISC loading complex (RLC), or micro-RNA (miRNA) loading complex (miRLC), which is composed of DICER1, AGO2 and TARBP2; DICER1 and TARBP2 are required to process precursor miRNAs (pre-miRNAs) to mature miRNAs and then load them onto AGO2. Note that the trimeric RLC/miRLC is also referred to as RISC. Interacts with DHX9, AGO1, PIWIL1 and PRKRA. Interacts with AGO2, TARBP2, EIF6, MOV10 and RPL7A (60S ribosome subunit); they form a large RNA-induced silencing complex (RISC). Interacts with BCDIN3D. Interacts (via Dicer dsRNA-binding fold domain) with ALOX5 (via PLAT domain); this interaction enhances arachidonate 5-lipoxygenase activity and modifies the miRNA precursor processing activity of DICER1. It depends on Mg(2+) as a cofactor. Mn(2+) is required as a cofactor.

The protein resides in the cytoplasm. It carries out the reaction Endonucleolytic cleavage to 5'-phosphomonoester.. Functionally, double-stranded RNA (dsRNA) endoribonuclease playing a central role in short dsRNA-mediated post-transcriptional gene silencing. Cleaves naturally occurring long dsRNAs and short hairpin pre-microRNAs (miRNA) into fragments of twenty-one to twenty-three nucleotides with 3' overhang of two nucleotides, producing respectively short interfering RNAs (siRNA) and mature microRNAs. SiRNAs and miRNAs serve as guide to direct the RNA-induced silencing complex (RISC) to complementary RNAs to degrade them or prevent their translation. Gene silencing mediated by siRNAs, also called RNA interference, controls the elimination of transcripts from mobile and repetitive DNA elements of the genome but also the degradation of exogenous RNA of viral origin for instance. The miRNA pathway on the other side is a mean to specifically regulate the expression of target genes. This Bos taurus (Bovine) protein is Endoribonuclease Dicer (DICER1).